Here is an 828-residue protein sequence, read N- to C-terminus: Outer membrane usher protein MrkC (828 aa).

A signal peptide spans Met1–Ala18. Cysteines 813 and 827 form a disulfide.

The protein belongs to the fimbrial export usher family.

It is found in the cell outer membrane. Involved in the export and assembly of the type 3 fimbrial subunit (MrkA). The sequence is that of Outer membrane usher protein MrkC (mrkC) from Klebsiella pneumoniae.